A 438-amino-acid polypeptide reads, in one-letter code: UDP-N-acetylmuramoylalanine--D-glutamate ligase (438 aa).

Residue 112 to 118 (GSNGKST) participates in ATP binding.

The protein belongs to the MurCDEF family.

Its subcellular location is the cytoplasm. It carries out the reaction UDP-N-acetyl-alpha-D-muramoyl-L-alanine + D-glutamate + ATP = UDP-N-acetyl-alpha-D-muramoyl-L-alanyl-D-glutamate + ADP + phosphate + H(+). Its pathway is cell wall biogenesis; peptidoglycan biosynthesis. Cell wall formation. Catalyzes the addition of glutamate to the nucleotide precursor UDP-N-acetylmuramoyl-L-alanine (UMA). The sequence is that of UDP-N-acetylmuramoylalanine--D-glutamate ligase (murD) from Escherichia coli O6:H1 (strain CFT073 / ATCC 700928 / UPEC).